The chain runs to 101 residues: Small ribosomal subunit protein uS14 (101 aa).

This sequence belongs to the universal ribosomal protein uS14 family. As to quaternary structure, part of the 30S ribosomal subunit. Contacts proteins S3 and S10.

In terms of biological role, binds 16S rRNA, required for the assembly of 30S particles and may also be responsible for determining the conformation of the 16S rRNA at the A site. The polypeptide is Small ribosomal subunit protein uS14 (Actinobacillus pleuropneumoniae serotype 3 (strain JL03)).